The primary structure comprises 646 residues: Type III restriction-modification enzyme EcoPI Mod subunit (646 aa).

The interval 123–126 (DPPY) is binding of S-adenosyl methionine.

Belongs to the N(4)/N(6)-methyltransferase family. Homodimer. A heterotetramer with stoichiometry Res(2)Mod(2).

The enzyme catalyses a 2'-deoxyadenosine in DNA + S-adenosyl-L-methionine = an N(6)-methyl-2'-deoxyadenosine in DNA + S-adenosyl-L-homocysteine + H(+). A beta subtype methylase that binds the system-specific DNA recognition site 5'-AGACC-3' and methylates A-3 (of only 1 strand as the other does not have an A residue). DNA restriction requires both the Res and Mod subunits. In Enterobacteriaceae (Bacteriophage P1), this protein is Type III restriction-modification enzyme EcoPI Mod subunit.